Consider the following 48-residue polypeptide: Cytochrome b559 subunit beta (48 aa).

A helical transmembrane segment spans residues 23-39 (WLAVHALAIPSVFFLGA). Histidine 27 lines the heme pocket.

Belongs to the PsbE/PsbF family. In terms of assembly, heterodimer of an alpha subunit and a beta subunit. PSII is composed of 1 copy each of membrane proteins PsbA, PsbB, PsbC, PsbD, PsbE, PsbF, PsbH, PsbI, PsbJ, PsbK, PsbL, PsbM, PsbT, PsbX, PsbY, Psb30/Ycf12, peripheral proteins PsbO, CyanoQ (PsbQ), PsbU, PsbV and a large number of cofactors. It forms dimeric complexes. Heme b serves as cofactor.

Its subcellular location is the cellular thylakoid membrane. Its function is as follows. This b-type cytochrome is tightly associated with the reaction center of photosystem II (PSII). PSII is a light-driven water:plastoquinone oxidoreductase that uses light energy to abstract electrons from H(2)O, generating O(2) and a proton gradient subsequently used for ATP formation. It consists of a core antenna complex that captures photons, and an electron transfer chain that converts photonic excitation into a charge separation. The sequence is that of Cytochrome b559 subunit beta from Prochlorococcus marinus (strain MIT 9515).